The following is a 75-amino-acid chain: Tautomerase PptA (75 aa).

The active-site Proton acceptor; via imino nitrogen is Pro-2.

Belongs to the 4-oxalocrotonate tautomerase family. PptA subfamily. As to quaternary structure, homodimer.

It localises to the cytoplasm. The protein is Tautomerase PptA of Escherichia coli (strain SMS-3-5 / SECEC).